We begin with the raw amino-acid sequence, 269 residues long: MNLSTKFQGHPYHIVSASPWPFFLSVVLFFNCLAATLYLHGYKHSSVFFGISFLGLLATMYLWFRDMSTEANIHGAHTKAVTKGLKIGFMLFLISETFLFASIFWAFFHSSLSPTFELGAVWPPVGIADKTIDPLEVPLLNTVILLTSGASLTYAHYSLIARNRENALKGLYMTIALSFLFLGGQAYEYWNAPFTISDSVYGASFYFATGLHGIHIIVGTILLLAATYNIYTYHLTNTHHNGFECGIYYWHFCDVVWLFLYLTIYIWGS.

A run of 7 helical transmembrane segments spans residues 19-39, 44-64, 87-107, 135-155, 170-190, 205-225, and 247-267; these read PWPF…TLYL, HSSV…YLWF, IGFM…FWAF, LEVP…LTYA, GLYM…YEYW, FYFA…LLLA, and IYYW…IYIW.

This sequence belongs to the cytochrome c oxidase subunit 3 family. In terms of assembly, component of the cytochrome c oxidase (complex IV, CIV), a multisubunit enzyme composed of a catalytic core of 3 subunits and several supernumerary subunits. The complex exists as a monomer or a dimer and forms supercomplexes (SCs) in the inner mitochondrial membrane with ubiquinol-cytochrome c oxidoreductase (cytochrome b-c1 complex, complex III, CIII).

The protein resides in the mitochondrion inner membrane. The enzyme catalyses 4 Fe(II)-[cytochrome c] + O2 + 8 H(+)(in) = 4 Fe(III)-[cytochrome c] + 2 H2O + 4 H(+)(out). Component of the cytochrome c oxidase, the last enzyme in the mitochondrial electron transport chain which drives oxidative phosphorylation. The respiratory chain contains 3 multisubunit complexes succinate dehydrogenase (complex II, CII), ubiquinol-cytochrome c oxidoreductase (cytochrome b-c1 complex, complex III, CIII) and cytochrome c oxidase (complex IV, CIV), that cooperate to transfer electrons derived from NADH and succinate to molecular oxygen, creating an electrochemical gradient over the inner membrane that drives transmembrane transport and the ATP synthase. Cytochrome c oxidase is the component of the respiratory chain that catalyzes the reduction of oxygen to water. Electrons originating from reduced cytochrome c in the intermembrane space (IMS) are transferred via the dinuclear copper A center (CU(A)) of subunit 2 and heme A of subunit 1 to the active site in subunit 1, a binuclear center (BNC) formed by heme A3 and copper B (CU(B)). The BNC reduces molecular oxygen to 2 water molecules using 4 electrons from cytochrome c in the IMS and 4 protons from the mitochondrial matrix. The protein is Cytochrome c oxidase subunit 3 (cox3) of Schizosaccharomyces pombe (strain 972 / ATCC 24843) (Fission yeast).